The primary structure comprises 227 residues: Cytidylate kinase (227 aa).

Residue 10–18 participates in ATP binding; it reads GPSGSGKGT.

It belongs to the cytidylate kinase family. Type 1 subfamily.

Its subcellular location is the cytoplasm. The catalysed reaction is CMP + ATP = CDP + ADP. The enzyme catalyses dCMP + ATP = dCDP + ADP. The protein is Cytidylate kinase of Acinetobacter baylyi (strain ATCC 33305 / BD413 / ADP1).